The following is a 501-amino-acid chain: Cytochrome P450 71B23 (501 aa).

Residues 1–21 (MSIFLCFLLLLLLLLVTIIFT) traverse the membrane as a helical segment. Cys-443 contributes to the heme binding site.

Belongs to the cytochrome P450 family. Heme serves as cofactor.

It localises to the membrane. This Arabidopsis thaliana (Mouse-ear cress) protein is Cytochrome P450 71B23 (CYP71B23).